The chain runs to 159 residues: Na(+)/H(+) antiporter subunit E1 (159 aa).

The next 4 helical transmembrane spans lie at 1-21, 27-47, 49-69, and 101-121; these read MAVQ…VTNS, FVLG…VLPG, FYVI…IELI, and WQIV…VLGV.

This sequence belongs to the CPA3 antiporters (TC 2.A.63) subunit E family. As to quaternary structure, may form a heterooligomeric complex that consists of seven subunits: mnhA1, mnhB1, mnhC1, mnhD1, mnhE1, mnhF1 and mnhG1.

It localises to the cell membrane. Functionally, mnh complex is a Na(+)/H(+) antiporter involved in Na(+) excretion. This Staphylococcus aureus (strain Mu3 / ATCC 700698) protein is Na(+)/H(+) antiporter subunit E1 (mnhE1).